The chain runs to 545 residues: Chaperonin GroEL (545 aa).

ATP-binding positions include 29 to 32 (TMGP), Lys50, 86 to 90 (DGTTT), Gly414, 477 to 479 (DAA), and Asp493.

This sequence belongs to the chaperonin (HSP60) family. As to quaternary structure, forms a cylinder of 14 subunits composed of two heptameric rings stacked back-to-back. Interacts with the co-chaperonin GroES.

It is found in the cytoplasm. It carries out the reaction ATP + H2O + a folded polypeptide = ADP + phosphate + an unfolded polypeptide.. Its function is as follows. Together with its co-chaperonin GroES, plays an essential role in assisting protein folding. The GroEL-GroES system forms a nano-cage that allows encapsulation of the non-native substrate proteins and provides a physical environment optimized to promote and accelerate protein folding. This Campylobacter jejuni (strain RM1221) protein is Chaperonin GroEL.